Consider the following 205-residue polypeptide: Lymphotoxin-alpha (205 aa).

The signal sequence occupies residues 1–34 (MTPPERLFLPRVRGTTLHLLLLGLLLVLLPGAQG). T41 carries O-linked (GalNAc...) threonine glycosylation. In terms of domain architecture, THD spans 63 to 205 (PAAHLIGDPS…STVFFGAFAL (143 aa)). N-linked (GlcNAc...) asparagine glycosylation occurs at N96.

This sequence belongs to the tumor necrosis factor family. As to quaternary structure, homotrimer, and heterotrimer of either two LTB and one LTA subunits or (less prevalent) two LTA and one LTB subunits. Interacts with TNFRSF14.

It localises to the secreted. It is found in the membrane. Cytokine that in its homotrimeric form binds to TNFRSF1A/TNFR1, TNFRSF1B/TNFBR and TNFRSF14/HVEM. In its heterotrimeric form with LTB binds to TNFRSF3/LTBR. Lymphotoxin is produced by lymphocytes and is cytotoxic for a wide range of tumor cells in vitro and in vivo. In Pan troglodytes (Chimpanzee), this protein is Lymphotoxin-alpha (LTA).